The chain runs to 239 residues: Purine nucleoside phosphorylase DeoD-type (239 aa).

His5 provides a ligand contact to a purine D-ribonucleoside. Residues Gly21 and Arg25 each contribute to the phosphate site. An N6-acetyllysine modification is found at Lys27. Phosphate contacts are provided by residues Arg44 and 88-91 (RVGS). A purine D-ribonucleoside is bound by residues 180 to 182 (EME) and 204 to 205 (SD). Catalysis depends on Asp205, which acts as the Proton donor.

Belongs to the PNP/UDP phosphorylase family. Homohexamer; trimer of homodimers.

The enzyme catalyses a purine D-ribonucleoside + phosphate = a purine nucleobase + alpha-D-ribose 1-phosphate. The catalysed reaction is a purine 2'-deoxy-D-ribonucleoside + phosphate = a purine nucleobase + 2-deoxy-alpha-D-ribose 1-phosphate. Catalyzes the reversible phosphorolytic breakdown of the N-glycosidic bond in the beta-(deoxy)ribonucleoside molecules, with the formation of the corresponding free purine bases and pentose-1-phosphate. This Shigella dysenteriae serotype 1 (strain Sd197) protein is Purine nucleoside phosphorylase DeoD-type.